A 189-amino-acid polypeptide reads, in one-letter code: Interferon alpha-5 (189 aa).

A signal peptide spans 1–21; that stretch reads MALPFVLLMALVVLNCKSICS. Cystine bridges form between Cys-24/Cys-122 and Cys-52/Cys-162.

This sequence belongs to the alpha/beta interferon family.

The protein resides in the secreted. Its function is as follows. Produced by macrophages, IFN-alpha have antiviral activities. Interferon stimulates the production of two enzymes: a protein kinase and an oligoadenylate synthetase. This Homo sapiens (Human) protein is Interferon alpha-5 (IFNA5).